A 457-amino-acid chain; its full sequence is MTKKVYVKTFGCQMNEYDSDKMVDVLNAAEGLEKTDTPEDADIILFNTCSVREKAQEKVFSDLGRVRELKEAKPGLLIGVGGCVASQEGASIVSRAPYVDLVFGPQTLHRLPQMIDARRESGRAQVDISFPEIEKFDHLPPARVEGPSAFVSIMEGCSKYCSYCVVPYTRGDEVSRPLDDVLTEVAGLADQGVREVTLLGQNVNAYRGALAAGSSEIADFATLIEYVADIPGIERIRYTTSHPKEFTQRLIDTYAKVPKLVNHLHLPVQHGSDRILMAMKRGYTVLEYKSVIRKLRAIRPDLSLSTDMIVGFPGETEDDFDKMMALVHEMSYDTSFSFIYSPRPGTPAANLHDDTPRDVKLKRLQHLQATIEENVARISQSMVGKVERILVEGPSRKDPNELAGRTENNRVVNFPAPLASHPRLIGQMIDVKINHAYPHSLRGELVLVSDDASAATH.

The region spanning 3-120 (KKVYVKTFGC…LPQMIDARRE (118 aa)) is the MTTase N-terminal domain. Positions 12, 49, 83, 157, 161, and 164 each coordinate [4Fe-4S] cluster. The Radical SAM core domain occupies 143 to 377 (RVEGPSAFVS…QATIEENVAR (235 aa)). One can recognise a TRAM domain in the interval 380–447 (QSMVGKVERI…PHSLRGELVL (68 aa)).

This sequence belongs to the methylthiotransferase family. MiaB subfamily. In terms of assembly, monomer. Requires [4Fe-4S] cluster as cofactor.

Its subcellular location is the cytoplasm. The enzyme catalyses N(6)-dimethylallyladenosine(37) in tRNA + (sulfur carrier)-SH + AH2 + 2 S-adenosyl-L-methionine = 2-methylsulfanyl-N(6)-dimethylallyladenosine(37) in tRNA + (sulfur carrier)-H + 5'-deoxyadenosine + L-methionine + A + S-adenosyl-L-homocysteine + 2 H(+). Its function is as follows. Catalyzes the methylthiolation of N6-(dimethylallyl)adenosine (i(6)A), leading to the formation of 2-methylthio-N6-(dimethylallyl)adenosine (ms(2)i(6)A) at position 37 in tRNAs that read codons beginning with uridine. The sequence is that of tRNA-2-methylthio-N(6)-dimethylallyladenosine synthase from Burkholderia lata (strain ATCC 17760 / DSM 23089 / LMG 22485 / NCIMB 9086 / R18194 / 383).